The primary structure comprises 126 residues: Actin-depolymerizing factor (126 aa).

Residues 1–126 form the ADF-H domain; that stretch reads EDNCKLKFLE…SFDIIKSRAL (126 aa).

It belongs to the actin-binding proteins ADF family. Preferentially in mature anther.

In terms of biological role, actin-depolymerizing protein. Severs actin filaments (F-actin) and binds to actin monomers. The chain is Actin-depolymerizing factor from Brassica napus (Rape).